The sequence spans 428 residues: Protein CANDIDATE G-PROTEIN COUPLED RECEPTOR 6 (428 aa).

Residues M1 to A22 form the signal peptide. N-linked (GlcNAc...) asparagine glycans are attached at residues N31, N89, and N157. 7 helical membrane-spanning segments follow: residues L173 to W193, I202 to V222, I238 to I258, L276 to E296, I310 to M330, F356 to M376, and V385 to F405.

This sequence belongs to the LU7TM family.

Its subcellular location is the membrane. In terms of biological role, G-protein coupled receptor. Plays a role in plants and microbes interactions. The polypeptide is Protein CANDIDATE G-PROTEIN COUPLED RECEPTOR 6 (Arabidopsis thaliana (Mouse-ear cress)).